The following is a 364-amino-acid chain: MLLSLVLHTYSMRYLLPSVVLLGTAPTYVLAWGVWRLLSAFLPARFYQALDDRLYCVYQSMVLFFFENYTGVQILLYGDLPKNKENIIYLANHQSTVDWIVADILAIRQNALGHVRYVLKEGLKWLPLYGCYFAQHGGIYVKRSAKFNEKEMRNKLQSYVDAGTPMYLVIFPEGTRYNPEQTKVLSASQAFAAQRGLAVLKHVLTPRIKATHVAFDCMKNYLDAIYDVTVVYEGKDDGGQRRESPTMTEFLCKECPKIHIHIDRIDKKDVPEEQEHMRRWLHERFEIKDKMLIEFYESPDPERRKRFPGKSVNSKLSIKKTLPSMLILSGLTAGMLMTDAGRKLYVNTWIYGTLLGCLWVTIKA.

The next 2 helical transmembrane spans lie at 15–35 and 61–81; these read LLPSVVLLGTAPTYVLAWGVW and MVLFFFENYTGVQILLYGDLP. Residues 93 to 98 carry the HXXXXD motif motif; it reads HQSTVD. A helical membrane pass occupies residues 344–364; that stretch reads LYVNTWIYGTLLGCLWVTIKA.

It belongs to the 1-acyl-sn-glycerol-3-phosphate acyltransferase family. As to expression, widely expressed.

It localises to the endoplasmic reticulum membrane. The protein localises to the nucleus envelope. It is found in the mitochondrion. It catalyses the reaction a 1-acyl-sn-glycero-3-phosphate + an acyl-CoA = a 1,2-diacyl-sn-glycero-3-phosphate + CoA. It carries out the reaction 1-(9Z-octadecenoyl)-sn-glycero-3-phosphate + tetradecanoyl-CoA = 1-(9Z)-octadecenoyl-2-tetradecanoyl-sn-glycero-3-phosphate + CoA. The enzyme catalyses pentadecanoyl-CoA + 1-(9Z-octadecenoyl)-sn-glycero-3-phosphate = 1-(9Z)-octadecenoyl-2-pentadecanoyl-sn-glycero-3-phosphate + CoA. The catalysed reaction is 1-(9Z-octadecenoyl)-sn-glycero-3-phosphate + octadecanoyl-CoA = 1-(9Z-octadecenoyl)-2-octadecanoyl-sn-glycero-3-phosphate + CoA. It catalyses the reaction nonadecanoyl-CoA + 1-(9Z-octadecenoyl)-sn-glycero-3-phosphate = 1-(9Z)-octadecenoyl-2-nonadecanoyl-sn-glycero-3-phosphate + CoA. It carries out the reaction 1-(9Z-octadecenoyl)-sn-glycero-3-phosphoethanolamine + (9Z)-octadecenoyl-CoA = 1,2-di-(9Z-octadecenoyl)-sn-glycero-3-phosphoethanolamine + CoA. The enzyme catalyses 1-(9Z-octadecenoyl)-sn-glycero-3-phosphocholine + (9Z)-octadecenoyl-CoA = 1,2-di-(9Z-octadecenoyl)-sn-glycero-3-phosphocholine + CoA. The catalysed reaction is 1-(9Z-octadecenoyl)-sn-glycero-3-phospho-(1D-myo-inositol) + (5Z,8Z,11Z,14Z)-eicosatetraenoyl-CoA = 1-(9Z-octadecenoyl)-2-(5Z,8Z,11Z,14Z-eicosatetraenoyl)-sn-glycero-3-phospho-1D-myo-inositol + CoA. It catalyses the reaction 1-(9Z-octadecenoyl)-sn-glycero-3-phospho-L-serine + (9Z)-octadecenoyl-CoA = 1,2-di-(9Z)-octadecenoyl-sn-glycero-3-phospho-L-serine + CoA. It carries out the reaction 1-(9Z-octadecenoyl)-sn-glycero-3-phospho-L-serine + (5Z,8Z,11Z,14Z)-eicosatetraenoyl-CoA = 1-(9Z-octadecenoyl)-2-(5Z,8Z,11Z,14Z-eicosatetraenoyl)-sn-glycero-3-phospho-L-serine + CoA. The enzyme catalyses 1-hexadecanoyl-sn-glycero-3-phosphate + (9Z)-octadecenoyl-CoA = 1-hexadecanoyl-2-(9Z-octadecenoyl)-sn-glycero-3-phosphate + CoA. The catalysed reaction is 1-heptadecanoyl-sn-glycero-3-phosphate + (9Z)-octadecenoyl-CoA = 1-heptadecanoyl-2-(9Z)-octadecenoyl-sn-glycero-3-phosphate + CoA. It catalyses the reaction 1-(5Z,8Z,11Z,14Z-eicosatetraenoyl)-sn-glycero-3-phosphate + (9Z)-octadecenoyl-CoA = 1-(5Z,8Z,11Z,14Z)-eicosatetraenoyl-2-(9Z)-octadecenoyl-sn-glycero-3-phosphate + CoA. It carries out the reaction 1-octadecanoyl-sn-glycero-3-phosphate + (9Z)-octadecenoyl-CoA = 1-octadecanoyl-2-(9Z-octadecenoyl)-sn-glycero-3-phosphate + CoA. The enzyme catalyses 1-(9Z-octadecenoyl)-sn-glycero-3-phosphate + (5Z,8Z,11Z,14Z)-eicosatetraenoyl-CoA = 1-(9Z)-octadecenoyl-2-(5Z,8Z,11Z,14Z)-eicosatetraenoyl-sn-glycero-3-phosphate + CoA. The catalysed reaction is heptadecanoyl-CoA + 1-(9Z-octadecenoyl)-sn-glycero-3-phosphate = 1-(9Z)-octadecenoyl-2-heptadecanoyl-sn-glycero-3-phosphate + CoA. It catalyses the reaction 1-(9Z-octadecenoyl)-sn-glycero-3-phosphocholine + (5Z,8Z,11Z,14Z)-eicosatetraenoyl-CoA = 1-(9Z)-octadecenoyl-2-(5Z,8Z,11Z,14Z)-icosatetraenoyl-sn-glycero-3-phosphocholine + CoA. It carries out the reaction 1-(9Z-octadecenoyl)-sn-glycero-3-phosphate + (9Z)-octadecenoyl-CoA = 1,2-di-(9Z-octadecenoyl)-sn-glycero-3-phosphate + CoA. The enzyme catalyses 1-(9Z-octadecenoyl)-sn-glycero-3-phosphate + hexadecanoyl-CoA = 1-hexadecanoyl-2-(9Z-octadecenoyl)-sn-glycero-3-phosphate + CoA. It participates in phospholipid metabolism; CDP-diacylglycerol biosynthesis; CDP-diacylglycerol from sn-glycerol 3-phosphate: step 2/3. Functionally, converts 1-acyl-sn-glycerol-3-phosphate (lysophosphatidic acid or LPA) into 1,2-diacyl-sn-glycerol-3-phosphate (phosphatidic acid or PA) by incorporating an acyl moiety at the sn-2 position of the glycerol backbone. Acts on LPA containing saturated or unsaturated fatty acids C15:0-C20:4 at the sn-1 position using C18:1-CoA as the acyl donor. Also acts on lysophosphatidylethanolamine using oleoyl-CoA, but not arachidonoyl-CoA, and lysophosphatidylinositol using arachidonoyl-CoA, but not oleoyl-CoA. Activity toward lysophosphatidylglycerol not detectable. This Homo sapiens (Human) protein is 1-acyl-sn-glycerol-3-phosphate acyltransferase epsilon (AGPAT5).